Consider the following 361-residue polypeptide: Caveolae-associated protein 4 (361 aa).

A disordered region spans residues 1–21 (MEHNGSASNADKIHQNRLSNV). Residues 100-124 (IKDVKARVEKQQTHVKKVEAKQEEI) are a coiled coil. Phosphoserine is present on residues Ser-152, Ser-171, and Ser-172. A coiled-coil region spans residues 204–248 (ENMQKTRQNFDKKVNRIRTRIVTPERRERLRQSGERLRQSGERLK). Residues 230-255 (RERLRQSGERLRQSGERLKQSGERFK) are compositionally biased toward basic and acidic residues. 2 disordered regions span residues 230 to 283 (RERL…AVAE) and 310 to 346 (PEALSETDPEEASATHPPQEGGEVSTPEPLKVTFKPQ). A Phosphothreonine modification is found at Thr-335. Phosphoserine is present on Ser-354.

The protein belongs to the CAVIN family. As to quaternary structure, component of the CAVIN complex composed of CAVIN1, CAVIN2, CAVIN3 and CAVIN4. Interacts with CAVIN1, ADRA1A, ADRA1B, MAPK1 and MAPK3. Interacts with CAVIN2; this augments the transactivation of NPPA.

The protein resides in the cytoplasm. It localises to the myofibril. It is found in the sarcomere. Its subcellular location is the cytosol. The protein localises to the cell membrane. The protein resides in the sarcolemma. It localises to the membrane. It is found in the caveola. Its function is as follows. Modulates the morphology of formed caveolae in cardiomyocytes, but is not required for caveolar formation. Facilitates the recruitment of MAPK1/3 to caveolae within cardiomyocytes and regulates alpha-1 adrenergic receptor-induced hypertrophic responses in cardiomyocytes through MAPK1/3 activation. Contributes to proper membrane localization and stabilization of caveolin-3 (CAV3) in cardiomyocytes. Induces RHOA activation and activates NPPA transcription and myofibrillar organization through the Rho/ROCK signaling pathway. This chain is Caveolae-associated protein 4 (CAVIN4), found in Bos taurus (Bovine).